Reading from the N-terminus, the 462-residue chain is Phospho-2-dehydro-3-deoxyheptonate aldolase AroG (462 aa).

Position 87 (Cys87) interacts with Mn(2+). Phosphoenolpyruvate-binding positions include Arg126, 283–284 (ER), Lys306, and Arg337. Mn(2+)-binding residues include His369, Glu411, and Asp441.

In terms of assembly, homodimer. Interacts with Rv0948c. Mn(2+) serves as cofactor. It depends on Co(2+) as a cofactor. Requires Cd(2+) as cofactor.

The enzyme catalyses D-erythrose 4-phosphate + phosphoenolpyruvate + H2O = 7-phospho-2-dehydro-3-deoxy-D-arabino-heptonate + phosphate. It participates in metabolic intermediate biosynthesis; chorismate biosynthesis; chorismate from D-erythrose 4-phosphate and phosphoenolpyruvate: step 1/7. Feedback inhibited by tryptophan, tyrosine, phenylalanine and chorismate. In terms of biological role, catalyzes an aldol-like condensation reaction between phosphoenolpyruvate (PEP) and D-erythrose 4-phosphate (E4P) to generate 3-deoxy-D-arabino-heptulosonate 7-phosphate (DAH7P) and inorganic phosphate. The polypeptide is Phospho-2-dehydro-3-deoxyheptonate aldolase AroG (aroG) (Mycobacterium tuberculosis (strain ATCC 25618 / H37Rv)).